The following is a 344-amino-acid chain: S-adenosylmethionine:tRNA ribosyltransferase-isomerase (344 aa).

It belongs to the QueA family. In terms of assembly, monomer.

It localises to the cytoplasm. The catalysed reaction is 7-aminomethyl-7-carbaguanosine(34) in tRNA + S-adenosyl-L-methionine = epoxyqueuosine(34) in tRNA + adenine + L-methionine + 2 H(+). The protein operates within tRNA modification; tRNA-queuosine biosynthesis. In terms of biological role, transfers and isomerizes the ribose moiety from AdoMet to the 7-aminomethyl group of 7-deazaguanine (preQ1-tRNA) to give epoxyqueuosine (oQ-tRNA). The protein is S-adenosylmethionine:tRNA ribosyltransferase-isomerase of Rhizorhabdus wittichii (strain DSM 6014 / CCUG 31198 / JCM 15750 / NBRC 105917 / EY 4224 / RW1) (Sphingomonas wittichii).